We begin with the raw amino-acid sequence, 810 residues long: Eukaryotic translation initiation factor 3 subunit C (810 aa).

A compositionally biased stretch (polar residues) spans 1-11 (MSRFFATNYNY). The disordered stretch occupies residues 1–98 (MSRFFATNYN…DSDESDEEDG (98 aa)). A compositionally biased stretch (low complexity) spans 12 to 33 (DETSSSSEEDLLSSSEELLSSS). Over residues 34–58 (EEGELSDDSLFNDESESESDFDSDD) the composition is skewed to acidic residues. One can recognise a PCI domain in the interval 605 to 780 (YHQHINLDLV…TYIVIEKGDE (176 aa)).

Belongs to the eIF-3 subunit C family. As to quaternary structure, component of the eukaryotic translation initiation factor 3 (eIF-3) complex.

The protein resides in the cytoplasm. In terms of biological role, component of the eukaryotic translation initiation factor 3 (eIF-3) complex, which is involved in protein synthesis of a specialized repertoire of mRNAs and, together with other initiation factors, stimulates binding of mRNA and methionyl-tRNAi to the 40S ribosome. The eIF-3 complex specifically targets and initiates translation of a subset of mRNAs involved in cell proliferation. In Candida glabrata (strain ATCC 2001 / BCRC 20586 / JCM 3761 / NBRC 0622 / NRRL Y-65 / CBS 138) (Yeast), this protein is Eukaryotic translation initiation factor 3 subunit C.